The chain runs to 866 residues: Fibrinogen alpha chain (866 aa).

Positions 1-19 (MFSMRIVCLVLSVVGTAWT) are cleaved as a signal peptide. Position 22 is a phosphoserine (Ser22). The tract at residues 36–38 (GPR) is alpha-chain polymerization, binding distal domain of another fibrin gamma chain. Ser45 carries the phosphoserine; by FAM20C modification. Ser50 carries the post-translational modification Phosphoserine. Ser56 is subject to Phosphoserine; by FAM20C. Residues 68-631 (CRMKGLIDEV…GHAKSRPVRD (564 aa)) are a coiled coil. The interval 262-460 (ERPGGNEITR…SGSTTTTRRS (199 aa)) is disordered. Positions 270-299 (TRGGSTSYGTGSETESPRNPSSAGSWNSGS) are enriched in low complexity. Ser281, Ser291, and Ser294 each carry phosphoserine. An O-linked (GalNAc...) threonine glycan is attached at Thr320. Residue Lys322 forms an Isoglutamyl lysine isopeptide (Lys-Gln) (interchain with Q-41 in alpha-2-antiplasmin) linkage. An Isoglutamyl lysine isopeptide (Gln-Lys) (interchain with K-?) cross-link involves residue Gln347. O-linked (GalNAc...) serine glycosylation is present at Ser351. Over residues 354–391 (PGSTGTWNPGSSERGSAGHWTSESSVSGSTGQWHSESG) the composition is skewed to polar residues. The residue at position 364 (Ser364) is a Phosphoserine; by FAM20C. Residue Gln385 forms an Isoglutamyl lysine isopeptide (Gln-Lys) (interchain with K-?) linkage. Thr412 carries the post-translational modification Phosphothreonine. The span at 424–449 (TRREYHTEKLVTSKGDKELRTGKEKV) shows a compositional bias: basic and acidic residues. The segment covering 450 to 460 (TSGSTTTTRRS) has biased composition (low complexity). Ser451 carries the post-translational modification Phosphoserine. Ser453 carries N-linked (GlcNAc...) asparagine; in variant Caracas-2 glycosylation. The cysteines at positions 461 and 491 are disulfide-linked. Position 501 is a phosphoserine (Ser501). Thr505 is modified (phosphothreonine). Position 524 is a phosphoserine; by FAM20C (Ser524). Isoglutamyl lysine isopeptide (Lys-Gln) (interchain with Q-?) cross-links involve residues Lys527 and Lys558. The segment at 543 to 638 (ETESRGSESG…VRDCDDVLQT (96 aa)) is disordered. Ser560 bears the Phosphoserine; by FAM20C mark. Pro565 carries the post-translational modification 4-hydroxyproline; by P4HA1. Isoglutamyl lysine isopeptide (Lys-Gln) (interchain with Q-?) cross-links involve residues Lys575, Lys581, and Lys599. Residues 575–589 (KSSSYSKQFTSSTSY) are compositionally biased toward low complexity. Positions 594–617 (STFESKSYKMADEAGSEADHEGTH) are enriched in basic and acidic residues. A Phosphoserine; by FAM20C modification is found at Ser609. Residues 618–627 (STKRGHAKSR) are compositionally biased toward basic residues. The Fibrinogen C-terminal domain occupies 623–864 (HAKSRPVRDC…AVRMKIRPLV (242 aa)). The N-linked (GlcNAc...) asparagine glycan is linked to Asn686. The Ca(2+) site is built by Asp791, Asp793, Trp795, and Glu797. The cysteines at positions 799 and 812 are disulfide-linked.

In terms of assembly, heterohexamer; disulfide linked. Contains 2 sets of 3 non-identical chains (alpha, beta and gamma). The 2 heterotrimers are in head to head conformation with the N-termini in a small central domain. As to quaternary structure, (Microbial infection) Interacts with Staphylococcus aureus protein Fib; this interaction inhibits fibrinogen-dependent platelet aggregation and protects the bacteria form phagocytosis. Post-translationally, the alpha chain is normally not N-glycosylated, even though glycosylation at Asn-686 was observed when a fragment of the protein was expressed in insect cells. It is well known that heterologous expression of isolated domains can lead to adventitious protein modifications. Besides, glycosylation at Asn-686 is supported by large-scale glycoproteomics studies, but the evidence is still quite tenuous. Most likely, Asn-686 is not glycosylated in the healthy human body, or only with low efficiency. In terms of processing, O-glycosylated. Forms F13A-mediated cross-links between a glutamine and the epsilon-amino group of a lysine residue, forming fibronectin-fibrinogen heteropolymers. Post-translationally, about one-third of the alpha chains in the molecules in blood were found to be phosphorylated. In terms of processing, conversion of fibrinogen to fibrin is triggered by thrombin, which cleaves fibrinopeptides A and B from alpha and beta chains, and thus exposes the N-terminal polymerization sites responsible for the formation of the soft clot. The soft clot is converted into the hard clot by factor XIIIA which catalyzes the epsilon-(gamma-glutamyl)lysine cross-linking between gamma chains (stronger) and between alpha chains (weaker) of different monomers. Phosphorylated by FAM20C in the extracellular medium. In terms of tissue distribution, detected in blood plasma (at protein level).

Its subcellular location is the secreted. Its function is as follows. Cleaved by the protease thrombin to yield monomers which, together with fibrinogen beta (FGB) and fibrinogen gamma (FGG), polymerize to form an insoluble fibrin matrix. Fibrin has a major function in hemostasis as one of the primary components of blood clots. In addition, functions during the early stages of wound repair to stabilize the lesion and guide cell migration during re-epithelialization. Was originally thought to be essential for platelet aggregation, based on in vitro studies using anticoagulated blood. However, subsequent studies have shown that it is not absolutely required for thrombus formation in vivo. Enhances expression of SELP in activated platelets via an ITGB3-dependent pathway. Maternal fibrinogen is essential for successful pregnancy. Fibrin deposition is also associated with infection, where it protects against IFNG-mediated hemorrhage. May also facilitate the immune response via both innate and T-cell mediated pathways. This chain is Fibrinogen alpha chain (FGA), found in Homo sapiens (Human).